The primary structure comprises 300 residues: MLKVPEHQVAGHIASDGKLGPLVDDQGRFFKPLQGDSRGEHEAKFYESFTSNMKVPDHIHRYFPVYHGTQLVEASDGSGKLPHLVLDDVVSGYANPSVMDVKIGSRTWYPDVSEEYFKKCIKKDRQTTTVSLGFRVSGFKIFDHQESSFWRAEKKLVLGYNADGARLALRKFVSSNSPADSNLTPNCAFASEVYGGCNGILAQLLELKDWFETQTLYHFNSCSILMIYENESILMQGGDDAPAPRAQVKLVDFAHVLDGNGVIDHNFLGGLCSFIKFIKDILQSVEKHDETDTSLLENGR.

S78 carries the phosphoserine modification.

Belongs to the inositol phosphokinase (IPK) family. In terms of assembly, interacts with KIN10 and KIN11. Phosphorylated by KIN10. In terms of tissue distribution, expressed in leaves, stems, roots, siliques and flowers. Detected in vascular strands, stigma cells, the abscission zones of fully elongated siliques, the root central cylinder and the root tip.

It localises to the nucleus. The catalysed reaction is 1D-myo-inositol 1,4,5-trisphosphate + 2 ATP = 1D-myo-inositol 1,3,4,5,6-pentakisphosphate + 2 ADP + 2 H(+). The enzyme catalyses 1D-myo-inositol 1,3,4,6-tetrakisphosphate + ATP = 1D-myo-inositol 1,3,4,5,6-pentakisphosphate + ADP + H(+). Its activity is regulated as follows. Down-regulated by KIN10 through its protein phosphorylation. In terms of biological role, inositol phosphate kinase with a broad substrate specificity. Phosphorylates inositol 1,4,5-trisphosphate (Ins(1,4,5)P3), inositol 1,4,5,6-tetrakisphosphate (Ins(1,4,5,6)P4), inositol 1,3,4,5-tetrakisphosphate (Ins(1,3,4,5)P4), inositol 1,3,4,6-tetrakisphosphate (Ins(1,3,4,6)P4) and inositol 1,2,3,4,6-pentakisphosphate (Ins(1,2,3,4,6)P5) but not inositol 1,4-bisphosphate (Ins(1,4)P2), inositol 1,3,4-trisphosphate (Ins(1,3,4)P3), inositol 1,2,6-trisphosphate (Ins(1,2,6)P3), inositol 3,4,5,6-tetrakisphosphate (Ins(3,4,5,6)P4), inositol 1,3,4,5,6-pentakisphosphate (Ins(1,3,4,5,6)P5), inositol 1,2,4,5,6-pentakisphosphate (Ins(1,2,4,5,6)P5) or inositol hexakisphosphate (InsP6). Involved in the auxin signaling pathway. Regulates axillary shoot branching and is required for phytate synthesis in seeds. This is Inositol polyphosphate multikinase beta (IPK2b) from Arabidopsis thaliana (Mouse-ear cress).